Reading from the N-terminus, the 419-residue chain is Probable glycosidase C21B10.07 (419 aa).

Disordered regions lie at residues 1 to 20 and 29 to 67; these read MGIP…AALS and DPAR…NNEN. Residues 30-59 are compositionally biased toward basic and acidic residues; that stretch reads PARKNESTNDVIDNHTDTEIDDHDNDHENL. Residues 88–108 traverse the membrane as a helical segment; that stretch reads FIWILIFIVALICSVLIGVLG. The 266-residue stretch at 122–387 folds into the GH16 domain; that stretch reads PSYKAKTYSL…WAGSSVYSSA (266 aa). Glu237 acts as the Nucleophile in catalysis. Glu242 (proton donor) is an active-site residue.

The protein belongs to the glycosyl hydrolase 16 family.

The protein localises to the membrane. The chain is Probable glycosidase C21B10.07 from Schizosaccharomyces pombe (strain 972 / ATCC 24843) (Fission yeast).